The sequence spans 473 residues: Photosystem II CP43 reaction center protein (473 aa).

Positions Met-1–Glu-14 are excised as a propeptide. The residue at position 15 (Thr-15) is an N-acetylthreonine. Thr-15 carries the post-translational modification Phosphothreonine. The next 5 membrane-spanning stretches (helical) occupy residues Leu-69–Ala-93, Leu-134–Asn-155, Lys-178–Thr-200, Lys-255–Ser-275, and Trp-291–Ala-312. Glu-367 contacts [CaMn4O5] cluster. The chain crosses the membrane as a helical span at residues Arg-447 to Pro-471.

Belongs to the PsbB/PsbC family. PsbC subfamily. As to quaternary structure, PSII is composed of 1 copy each of membrane proteins PsbA, PsbB, PsbC, PsbD, PsbE, PsbF, PsbH, PsbI, PsbJ, PsbK, PsbL, PsbM, PsbT, PsbX, PsbY, PsbZ, Psb30/Ycf12, at least 3 peripheral proteins of the oxygen-evolving complex and a large number of cofactors. It forms dimeric complexes. Binds multiple chlorophylls and provides some of the ligands for the Ca-4Mn-5O cluster of the oxygen-evolving complex. It may also provide a ligand for a Cl- that is required for oxygen evolution. PSII binds additional chlorophylls, carotenoids and specific lipids. is required as a cofactor.

The protein resides in the plastid. It localises to the chloroplast thylakoid membrane. Its function is as follows. One of the components of the core complex of photosystem II (PSII). It binds chlorophyll and helps catalyze the primary light-induced photochemical processes of PSII. PSII is a light-driven water:plastoquinone oxidoreductase, using light energy to abstract electrons from H(2)O, generating O(2) and a proton gradient subsequently used for ATP formation. The sequence is that of Photosystem II CP43 reaction center protein from Cicer arietinum (Chickpea).